The chain runs to 426 residues: Glutamyl-tRNA reductase (426 aa).

Substrate contacts are provided by residues threonine 51–arginine 54, serine 110, glutamate 115–glutamine 117, and glutamine 121. Catalysis depends on cysteine 52, which acts as the Nucleophile. Glycine 190–alanine 195 is an NADP(+) binding site.

It belongs to the glutamyl-tRNA reductase family. Homodimer.

The enzyme catalyses (S)-4-amino-5-oxopentanoate + tRNA(Glu) + NADP(+) = L-glutamyl-tRNA(Glu) + NADPH + H(+). It functions in the pathway porphyrin-containing compound metabolism; protoporphyrin-IX biosynthesis; 5-aminolevulinate from L-glutamyl-tRNA(Glu): step 1/2. Its function is as follows. Catalyzes the NADPH-dependent reduction of glutamyl-tRNA(Glu) to glutamate 1-semialdehyde (GSA). The protein is Glutamyl-tRNA reductase of Desulfotalea psychrophila (strain LSv54 / DSM 12343).